The sequence spans 283 residues: NADPH-dependent 7-cyano-7-deazaguanine reductase (283 aa).

89 to 91 (IES) contributes to the substrate binding site. An NADPH-binding site is contributed by 91 to 92 (SK). Cys190 functions as the Thioimide intermediate in the catalytic mechanism. The active-site Proton donor is Asp197. Residue 229-230 (HE) coordinates substrate. Residue 258–259 (RG) participates in NADPH binding.

The protein belongs to the GTP cyclohydrolase I family. QueF type 2 subfamily. Homodimer.

It is found in the cytoplasm. It catalyses the reaction 7-aminomethyl-7-carbaguanine + 2 NADP(+) = 7-cyano-7-deazaguanine + 2 NADPH + 3 H(+). It functions in the pathway tRNA modification; tRNA-queuosine biosynthesis. Functionally, catalyzes the NADPH-dependent reduction of 7-cyano-7-deazaguanine (preQ0) to 7-aminomethyl-7-deazaguanine (preQ1). In Aromatoleum aromaticum (strain DSM 19018 / LMG 30748 / EbN1) (Azoarcus sp. (strain EbN1)), this protein is NADPH-dependent 7-cyano-7-deazaguanine reductase.